The following is a 254-amino-acid chain: DNA repair protein RecO (254 aa).

Belongs to the RecO family.

Involved in DNA repair and RecF pathway recombination. The sequence is that of DNA repair protein RecO from Rhodopseudomonas palustris (strain BisB18).